Consider the following 523-residue polypeptide: Transcription factor MYB120 (523 aa).

2 HTH myb-type domains span residues 23–75 and 76–130; these read GVIL…ANHL and RPNL…KRLL. 2 DNA-binding regions (H-T-H motif) span residues 51–75 and 103–126; these read WNAVQKNTGLARCGKSCRLRWANHL and WARMAAQLPGRTDNEIKNYWNTRL. Disordered stretches follow at residues 140-254, 332-373, 396-426, and 444-470; these read DIIP…YPTL, QTAT…SHYT, QIPQIDGFNNVNNFTDNERQNHNLNSSGAHR, and LASGGRGRPPKRRQLTASLPNHNNNTN. Residues 147-167 show a composition bias toward basic residues; sequence LHPHPHHQQQQQHNHHHHHHQ. A compositionally biased stretch (polar residues) spans 175–185; the sequence is MYFQPQSSQRN. Composition is skewed to low complexity over residues 202–212, 223–232, and 341–368; these read SSSSFTFHTTT, TPNTPSQLSS, and NPYSSSPSFSLNPSSSSYPTSTSSPSFL. The span at 396–410 shows a compositional bias: polar residues; the sequence is QIPQIDGFNNVNNFT.

As to expression, expressed in pollen grains and pollen tube. Mostly expressed in mature pollen grains, and, to a lower extent, in inflorescences and siliques.

The protein resides in the nucleus. Its function is as follows. Transcription activator. Binds to 5'-CAACTGTC-3' and/or 5'-TAACAAA-3' motif in target gene promoter to promote their expression. Together with MYB97 and MYB101, functions as a male factor that controls pollen tube-synergid interaction in fertilization. Required for pollen tube growth arrest and sperm cell release in the female gametophyte, probably via the regulation of pollen tube-specific gene expression. In Arabidopsis thaliana (Mouse-ear cress), this protein is Transcription factor MYB120.